Reading from the N-terminus, the 536-residue chain is L-ornithine N(5)-monooxygenase SIDA (536 aa).

The tract at residues 1–25 (MSPHRETTGDESTTTTVPQNGTNGA) is disordered. FAD is bound by residues 115 to 123 (EKQTRFAWH) and Gln134. An L-ornithine-binding site is contributed by Lys139. Val200 lines the FAD pocket. Arg310 lines the NADP(+) pocket. L-ornithine-binding positions include 324 to 327 (NSIF) and Asn354. 515–517 (TLL) contacts FAD. Residue Ser518 coordinates L-ornithine.

This sequence belongs to the lysine N(6)-hydroxylase/L-ornithine N(5)-oxygenase family. As to quaternary structure, homotetramer. It depends on FAD as a cofactor.

The catalysed reaction is L-ornithine + NADH + O2 = N(5)-hydroxy-L-ornithine + NAD(+) + H2O. The enzyme catalyses L-ornithine + NADPH + O2 = N(5)-hydroxy-L-ornithine + NADP(+) + H2O. It functions in the pathway siderophore biosynthesis. L-ornithine N(5)-monooxygenase; part of the gene cluster that mediates the biosynthesis of at least 11 siderophores, including beauverichelin A, dimerumic acid (DA), Na-dimethyl coprogen (NADC), eleutherazine B, ferricrocin (FC), fusarinine A, fusarinine C (FsC), metachelin A, mevalonolactone, rhodotorulic acid (RA) and tenellin. This cocktail of siderophores for iron metabolism is essential for virulence, and more specifically for the fungal virulence in penetrating through the host cuticle. Siderophore synthesis is also involved in conidial germination under iron-deficient conditions. SIDA initiates the biosynthesis of these siderophores with the enzymatic hydroxylation of ornithine. SIDA is indispensable for the production of most siderophores including fusarinine C and ferricrocin but not mevalonolactone and eleutherazine B. However, SIDA mediates the metabolic interplay between synthesis of mevalonolactone and eleutherazine B and other siderophores. The sequence is that of L-ornithine N(5)-monooxygenase SIDA from Beauveria bassiana (strain ARSEF 2860) (White muscardine disease fungus).